The following is a 730-amino-acid chain: Double-strand break repair protein MRE11 (730 aa).

Positions 17, 19, 57, and 124 each coordinate Mn(2+). Catalysis depends on H125, which acts as the Proton donor. H213, H241, and H243 together coordinate Mn(2+). The tract at residues 521–730 is disordered; it reads LSGQQKQAQR…SMPARKSKRY (210 aa). The span at 581 to 591 shows a compositional bias: acidic residues; it reads GDEDNLFEEEE. The span at 595–633 shows a compositional bias: low complexity; sequence KTTAKRAPTTRATRKTAAATRATTATKASAPAKKSIAAP. Residues 645-659 show a composition bias toward acidic residues; sequence SAEEEEDVIMDDDDD. The segment covering 662 to 672 has biased composition (pro residues); that stretch reads PAPPVKAPPPK. A compositionally biased stretch (polar residues) spans 685-704; the sequence is TRQTTLNFSQAERPTRTTQK. Acidic residues predominate over residues 708-719; the sequence is ISDDEISEDDAF.

Belongs to the MRE11/RAD32 family. In terms of assembly, component of the MRN complex composed of two heterodimers RAD50 and MRE11 associated with a single NBS1. Mn(2+) serves as cofactor.

It localises to the nucleus. Its subcellular location is the chromosome. It is found in the telomere. Its function is as follows. Core component of the MRN complex, which plays a central role in double-strand break (DSB) repair, DNA recombination, maintenance of telomere integrity and meiosis. The MRN complex is involved in the repair of DNA double-strand breaks (DSBs) via homologous recombination (HR), an error-free mechanism which primarily occurs during S and G2 phases. The complex (1) mediates the end resection of damaged DNA, which generates proper single-stranded DNA, a key initial steps in HR, and is (2) required for the recruitment of other repair factors and efficient activation of ATM and ATR upon DNA damage. Within the MRN complex, MRE11 possesses both single-strand endonuclease activity and double-strand-specific 3'-5' exonuclease activity. MRE11 first endonucleolytically cleaves the 5' strand at DNA DSB ends to prevent non-homologous end joining (NHEJ) and licence HR. It then generates a single-stranded DNA gap via 3' to 5' exonucleolytic degradation, which is required for single-strand invasion and recombination. In Chaetomium thermophilum (strain DSM 1495 / CBS 144.50 / IMI 039719) (Thermochaetoides thermophila), this protein is Double-strand break repair protein MRE11.